We begin with the raw amino-acid sequence, 232 residues long: Enterobactin synthase component D (232 aa).

Positions 106, 108, and 150 each coordinate Mg(2+).

Belongs to the P-Pant transferase superfamily. EntD family. As to quaternary structure, entB, EntD, EntE, and EntF form a multienzyme complex called enterobactin synthase. It depends on Mg(2+) as a cofactor.

It is found in the membrane. It carries out the reaction apo-[aryl-carrier protein] + CoA = holo-[aryl-carrier protein] + adenosine 3',5'-bisphosphate + H(+). The enzyme catalyses apo-[peptidyl-carrier protein] + CoA = holo-[peptidyl-carrier protein] + adenosine 3',5'-bisphosphate + H(+). The protein operates within siderophore biosynthesis; enterobactin biosynthesis. Functionally, involved in the biosynthesis of the siderophore enterobactin (enterochelin), which is a macrocyclic trimeric lactone of N-(2,3-dihydroxybenzoyl)-serine. The serine trilactone serves as a scaffolding for the three catechol functionalities that provide hexadentate coordination for the tightly ligated iron(2+) atoms. Plays an essential role in the assembly of the enterobactin by catalyzing the transfer of the 4'-phosphopantetheine (Ppant) moiety from coenzyme A to the apo-domains of both EntB (ArCP domain) and EntF (PCP domain) to yield their holo-forms which make them competent for the activation of 2,3-dihydroxybenzoate (DHB) and L-serine, respectively. This is Enterobactin synthase component D from Salmonella austin.